The sequence spans 134 residues: Small ribosomal subunit protein uS11 (134 aa).

The segment at Met-1 to Val-21 is disordered. Basic residues predominate over residues Ala-9–Val-21.

This sequence belongs to the universal ribosomal protein uS11 family. Part of the 30S ribosomal subunit. Interacts with proteins S7 and S18. Binds to IF-3.

In terms of biological role, located on the platform of the 30S subunit, it bridges several disparate RNA helices of the 16S rRNA. Forms part of the Shine-Dalgarno cleft in the 70S ribosome. The chain is Small ribosomal subunit protein uS11 from Thermobifida fusca (strain YX).